The sequence spans 670 residues: uncharacterized protein (670 aa).

Helical transmembrane passes span 23 to 42 (YALR…YYLN), 47 to 69 (YWAM…SKSL), 76 to 98 (LLGA…FFLL), 118 to 140 (VAYA…VNIT), 153 to 170 (VCEV…MMIL), 381 to 403 (QWDA…SAVA), 410 to 432 (SLLM…GLMV), 437 to 454 (LWQF…MQLL), 461 to 483 (FAAL…NPPV), and 493 to 510 (NLAK…FAIL).

This sequence belongs to the aromatic acid exporter ArAE (TC 2.A.85) family.

It is found in the cell membrane. This is an uncharacterized protein from Escherichia coli (strain K12).